A 78-amino-acid chain; its full sequence is TP53-regulated inhibitor of apoptosis 1 (78 aa).

The stretch at 1–52 forms a coiled coil; sequence MNSVGEECTDMKREYDQCFNRWFAEKFLKGECSGDPCTELFRRYRDCVQKAI. Residues 5–55 form the CHCH domain; sequence GEECTDMKREYDQCFNRWFAEKFLKGECSGDPCTELFRRYRDCVQKAIKDK. Short sequence motifs (cx9C motif) lie at residues 8–18 and 37–47; these read CTDMKREYDQC and CTELFRRYRDC. Intrachain disulfides connect C8-C47 and C18-C37.

It belongs to the TRIAP1/MDM35 family. As to quaternary structure, monomer. Forms a complex with prelid1 in the mitochondrion intermembrane space. Interacts with prelid3a. Expressed in the developing pronephros.

Its subcellular location is the mitochondrion. The protein resides in the mitochondrion intermembrane space. The enzyme catalyses a 1,2-diacyl-sn-glycero-3-phosphate(in) = a 1,2-diacyl-sn-glycero-3-phosphate(out). Its function is as follows. Involved in the modulation of the mitochondrial apoptotic pathway by ensuring the accumulation of cardiolipin (CL) in mitochondrial membranes. The triap1:prelid1 complex probably functions as a phosphatidic acid (PA) transporter across the mitochondrion intermembrane space to provide PA for cardiolipin CL synthesis in the inner membrane. Likewise, the triap1:prelid3a complex mediates the transfer of phosphatidic acid (PA) between liposomes (in vitro) and probably functions as a PA transporter across the mitochondrion intermembrane space (in vivo). Mediates cell survival by inhibiting activation of caspase-9 which prevents induction of apoptosis. Required for pronephros development; probably involved at an early stage in the formation of pronephric components derived from the somatic layer. The polypeptide is TP53-regulated inhibitor of apoptosis 1 (Xenopus tropicalis (Western clawed frog)).